The chain runs to 90 residues: Acylphosphatase (90 aa).

Positions 3-90 (KKQFIVYGLV…REFTDFSVRY (88 aa)) constitute an Acylphosphatase-like domain. Catalysis depends on residues arginine 18 and asparagine 36.

The protein belongs to the acylphosphatase family.

The enzyme catalyses an acyl phosphate + H2O = a carboxylate + phosphate + H(+). This Pasteurella multocida (strain Pm70) protein is Acylphosphatase (acyP).